The sequence spans 368 residues: Divinyl chlorophyll a/b light-harvesting protein PcbA (368 aa).

Transmembrane regions (helical) follow at residues 27-47 (FIAS…ANTL), 63-83 (GFVV…NGVI), 89-109 (MLVV…GAML), 203-223 (VMGG…WHIF), 243-263 (FVLS…AFWA), and 307-327 (LSNF…WHGL).

The protein belongs to the PsbB/PsbC family. IsiA/Pcb subfamily. In terms of assembly, the antenna complex consists of divinyl chlorophylls (a and b) and divinyl chlorophyll a/b binding proteins. Forms complexes with PSII, consisting of a PSII dimer and 4 or 8 PcbA subunits. These complexes are also found under conditions of iron-starvation. It depends on divinyl chlorophyll a as a cofactor. Divinyl chlorophyll b is required as a cofactor.

It is found in the cellular thylakoid membrane. The antenna complex functions as a light receptor, it captures and delivers excitation energy to photosystems II. The Prochlorales pcb genes are not related to higher plant LHCs. This chain is Divinyl chlorophyll a/b light-harvesting protein PcbA (pcbA), found in Prochlorococcus marinus (strain MIT 9313).